A 177-amino-acid polypeptide reads, in one-letter code: ATP synthase subunit delta (177 aa).

This sequence belongs to the ATPase delta chain family. As to quaternary structure, F-type ATPases have 2 components, F(1) - the catalytic core - and F(0) - the membrane proton channel. F(1) has five subunits: alpha(3), beta(3), gamma(1), delta(1), epsilon(1). F(0) has three main subunits: a(1), b(2) and c(10-14). The alpha and beta chains form an alternating ring which encloses part of the gamma chain. F(1) is attached to F(0) by a central stalk formed by the gamma and epsilon chains, while a peripheral stalk is formed by the delta and b chains.

It is found in the cell inner membrane. Its function is as follows. F(1)F(0) ATP synthase produces ATP from ADP in the presence of a proton or sodium gradient. F-type ATPases consist of two structural domains, F(1) containing the extramembraneous catalytic core and F(0) containing the membrane proton channel, linked together by a central stalk and a peripheral stalk. During catalysis, ATP synthesis in the catalytic domain of F(1) is coupled via a rotary mechanism of the central stalk subunits to proton translocation. This protein is part of the stalk that links CF(0) to CF(1). It either transmits conformational changes from CF(0) to CF(1) or is implicated in proton conduction. In Sodalis glossinidius (strain morsitans), this protein is ATP synthase subunit delta.